The chain runs to 166 residues: Thiol peroxidase (166 aa).

Residues 18-166 enclose the Thioredoxin domain; it reads LKVGDKAPDV…NYEALLKVLK (149 aa). The active-site Cysteine sulfenic acid (-SOH) intermediate is cysteine 60. A disulfide bridge connects residues cysteine 60 and cysteine 94.

It belongs to the peroxiredoxin family. Tpx subfamily. In terms of assembly, homodimer.

It carries out the reaction a hydroperoxide + [thioredoxin]-dithiol = an alcohol + [thioredoxin]-disulfide + H2O. In terms of biological role, thiol-specific peroxidase that catalyzes the reduction of hydrogen peroxide and organic hydroperoxides to water and alcohols, respectively. Plays a role in cell protection against oxidative stress by detoxifying peroxides. The protein is Thiol peroxidase of Helicobacter pylori (strain ATCC 700392 / 26695) (Campylobacter pylori).